Reading from the N-terminus, the 98-residue chain is NADH-ubiquinone oxidoreductase chain 4L (98 aa).

The next 3 membrane-spanning stretches (helical) occupy residues 1 to 21, 29 to 49, and 61 to 81; these read MTPT…GMLT, SLLC…LIAL, and IILL…LVSI.

The protein belongs to the complex I subunit 4L family. In terms of assembly, core subunit of respiratory chain NADH dehydrogenase (Complex I) which is composed of 45 different subunits.

Its subcellular location is the mitochondrion inner membrane. The enzyme catalyses a ubiquinone + NADH + 5 H(+)(in) = a ubiquinol + NAD(+) + 4 H(+)(out). In terms of biological role, core subunit of the mitochondrial membrane respiratory chain NADH dehydrogenase (Complex I) which catalyzes electron transfer from NADH through the respiratory chain, using ubiquinone as an electron acceptor. Part of the enzyme membrane arm which is embedded in the lipid bilayer and involved in proton translocation. The polypeptide is NADH-ubiquinone oxidoreductase chain 4L (MT-ND4L) (Macaca pagensis (Mentawai macaque)).